Here is a 265-residue protein sequence, read N- to C-terminus: Mlc titration factor A (265 aa).

4 residues coordinate Zn(2+): H111, H148, H152, and E211.

Belongs to the MtfA family. As to quaternary structure, interacts with Mlc. It depends on Zn(2+) as a cofactor.

The protein resides in the cytoplasm. Involved in the modulation of the activity of the glucose-phosphotransferase system (glucose-PTS). Interacts with the transcriptional repressor Mlc, preventing its interaction with DNA and leading to the modulation of expression of genes regulated by Mlc, including ptsG, which encodes the PTS system glucose-specific EIICB component. In terms of biological role, shows zinc-dependent metallopeptidase activity. The chain is Mlc titration factor A from Escherichia fergusonii (strain ATCC 35469 / DSM 13698 / CCUG 18766 / IAM 14443 / JCM 21226 / LMG 7866 / NBRC 102419 / NCTC 12128 / CDC 0568-73).